A 306-amino-acid polypeptide reads, in one-letter code: UDP-N-acetylenolpyruvoylglucosamine reductase (306 aa).

One can recognise an FAD-binding PCMH-type domain in the interval lysine 28 to glycine 193. The active site involves arginine 172. Residue serine 222 is the Proton donor of the active site. Glutamate 292 is an active-site residue.

Belongs to the MurB family. Requires FAD as cofactor.

It is found in the cytoplasm. It carries out the reaction UDP-N-acetyl-alpha-D-muramate + NADP(+) = UDP-N-acetyl-3-O-(1-carboxyvinyl)-alpha-D-glucosamine + NADPH + H(+). The protein operates within cell wall biogenesis; peptidoglycan biosynthesis. Cell wall formation. The chain is UDP-N-acetylenolpyruvoylglucosamine reductase from Streptococcus mutans serotype c (strain ATCC 700610 / UA159).